We begin with the raw amino-acid sequence, 249 residues long: Diaminopimelate epimerase (249 aa).

Substrate-binding residues include Asn-11 and Asn-60. The active-site Proton donor is the Cys-69. Substrate-binding positions include Gly-70–Asn-71, Asn-164, and Glu-182–Arg-183. Cys-192 acts as the Proton acceptor in catalysis. A substrate-binding site is contributed by Gly-193–Thr-194.

This sequence belongs to the diaminopimelate epimerase family. As to quaternary structure, homodimer.

It is found in the cytoplasm. The enzyme catalyses (2S,6S)-2,6-diaminopimelate = meso-2,6-diaminopimelate. The protein operates within amino-acid biosynthesis; L-lysine biosynthesis via DAP pathway; DL-2,6-diaminopimelate from LL-2,6-diaminopimelate: step 1/1. Functionally, catalyzes the stereoinversion of LL-2,6-diaminopimelate (L,L-DAP) to meso-diaminopimelate (meso-DAP), a precursor of L-lysine and an essential component of the bacterial peptidoglycan. The polypeptide is Diaminopimelate epimerase (Campylobacter lari (strain RM2100 / D67 / ATCC BAA-1060)).